Consider the following 416-residue polypeptide: Gamma-glutamyl phosphate reductase (416 aa).

This sequence belongs to the gamma-glutamyl phosphate reductase family.

It localises to the cytoplasm. The enzyme catalyses L-glutamate 5-semialdehyde + phosphate + NADP(+) = L-glutamyl 5-phosphate + NADPH + H(+). It functions in the pathway amino-acid biosynthesis; L-proline biosynthesis; L-glutamate 5-semialdehyde from L-glutamate: step 2/2. Catalyzes the NADPH-dependent reduction of L-glutamate 5-phosphate into L-glutamate 5-semialdehyde and phosphate. The product spontaneously undergoes cyclization to form 1-pyrroline-5-carboxylate. The sequence is that of Gamma-glutamyl phosphate reductase from Vibrio cholerae serotype O1 (strain ATCC 39541 / Classical Ogawa 395 / O395).